We begin with the raw amino-acid sequence, 425 residues long: Tyrosine--tRNA ligase (425 aa).

Residue Tyr33 participates in L-tyrosine binding. The 'HIGH' region motif lies at 38-47 (PTADSLHLGN). Tyr170 and Gln174 together coordinate L-tyrosine. Positions 230 to 234 (KFGKS) match the 'KMSKS' region motif. Residue Lys233 coordinates ATP. Residues 356 to 422 (KKLIDLLVET…GKKNKMIIRL (67 aa)) enclose the S4 RNA-binding domain.

This sequence belongs to the class-I aminoacyl-tRNA synthetase family. TyrS type 1 subfamily. As to quaternary structure, homodimer.

It localises to the cytoplasm. It catalyses the reaction tRNA(Tyr) + L-tyrosine + ATP = L-tyrosyl-tRNA(Tyr) + AMP + diphosphate + H(+). Functionally, catalyzes the attachment of tyrosine to tRNA(Tyr) in a two-step reaction: tyrosine is first activated by ATP to form Tyr-AMP and then transferred to the acceptor end of tRNA(Tyr). The sequence is that of Tyrosine--tRNA ligase from Protochlamydia amoebophila (strain UWE25).